A 369-amino-acid polypeptide reads, in one-letter code: Putative cyclin-F1-1 (369 aa).

Positions 328–350 (AQHHLESKPAGAAGVGINSSGDD) are disordered.

It belongs to the cyclin family. Cyclin F subfamily.

This is Putative cyclin-F1-1 (CYCF1-1) from Oryza sativa subsp. japonica (Rice).